A 362-amino-acid chain; its full sequence is RING-H2 finger protein ATL52 (362 aa).

The chain crosses the membrane as a helical span at residues 58-78 (LIALIGILTSALILVSYYTLI). The RING-type; atypical zinc-finger motif lies at 142–184 (CSVCLSEFEENESLRLLPKCNHAFHLPCIDTWLKSHSNCPLCR). Disordered regions lie at residues 252–271 (DARS…DEDS) and 296–333 (EDEE…RSGG). The segment covering 309 to 319 (QRREEGEDGDG) has biased composition (basic and acidic residues).

It belongs to the RING-type zinc finger family. ATL subfamily. Expressed in flowers.

It localises to the membrane. The catalysed reaction is S-ubiquitinyl-[E2 ubiquitin-conjugating enzyme]-L-cysteine + [acceptor protein]-L-lysine = [E2 ubiquitin-conjugating enzyme]-L-cysteine + N(6)-ubiquitinyl-[acceptor protein]-L-lysine.. The protein operates within protein modification; protein ubiquitination. This chain is RING-H2 finger protein ATL52 (ATL52), found in Arabidopsis thaliana (Mouse-ear cress).